The sequence spans 163 residues: Endoribonuclease YbeY (163 aa).

Positions 129, 133, and 139 each coordinate Zn(2+).

It belongs to the endoribonuclease YbeY family. Zn(2+) serves as cofactor.

Its subcellular location is the cytoplasm. Functionally, single strand-specific metallo-endoribonuclease involved in late-stage 70S ribosome quality control and in maturation of the 3' terminus of the 16S rRNA. This Picosynechococcus sp. (strain ATCC 27264 / PCC 7002 / PR-6) (Agmenellum quadruplicatum) protein is Endoribonuclease YbeY.